Consider the following 317-residue polypeptide: Gamma-glutamyl hydrolase (317 aa).

A signal peptide spans 1-24; that stretch reads MANLGYLLCLLGLLLCGLSSPGMS. The Gamma-glutamyl hydrolase domain maps to 25–317; the sequence is RPYNHGSERP…SSFQQAYMFD (293 aa). Residue N100 is glycosylated (N-linked (GlcNAc...) (high mannose) asparagine). C133 functions as the Nucleophile in the catalytic mechanism. N162 and N188 each carry an N-linked (GlcNAc...) (high mannose) asparagine glycan. The N-linked (GlcNAc...) asparagine glycan is linked to N202. H243 (proton donor) is an active-site residue. N306 carries an N-linked (GlcNAc...) asparagine glycan.

The protein belongs to the peptidase C26 family. Homodimer. In terms of tissue distribution, isoform I (more expressed than isoform II in all tissues) is highly expressed in salivary gland, followed by kidney, liver, lung, stomach and uterus, and weakly expressed in small intestine, brain and fetal liver. Also expressed at a lower level in thymus, spleen and skeletal muscle. Also expressed in tumors.

The protein resides in the secreted. It localises to the extracellular space. Its subcellular location is the lysosome. It is found in the melanosome. The enzyme catalyses (6S)-5,6,7,8-tetrahydrofolyl-(gamma-L-Glu)(n) + (n-1) H2O = (6S)-5,6,7,8-tetrahydrofolate + (n-1) L-glutamate. In terms of biological role, hydrolyzes the polyglutamate sidechains of pteroylpolyglutamates. Progressively removes gamma-glutamyl residues from pteroylpoly-gamma-glutamate to yield pteroyl-alpha-glutamate (folic acid) and free glutamate. May play an important role in the bioavailability of dietary pteroylpolyglutamates and in the metabolism of pteroylpolyglutamates and antifolates. This chain is Gamma-glutamyl hydrolase (Ggh), found in Mus musculus (Mouse).